A 303-amino-acid chain; its full sequence is MSFTTKVKEELIHLSTGDNNELAAIIKLSGSLGLAHQSLHLSITTENAKIARYIYSFIEDAYVIVPEIRYHQKTNLRKNRVYTVYVEQGVETILADLKLADSFFGLETGIEPQVLSDDNAGRSYLKGAFLTAGSIRDPESGKYQLEIYSVYLDHAQDLAQLMQKFMLDAKTIEHKSGAVTYLQKAEDIMDFLIIIGAMSCKEDFEAIKLLREARNDINRANNAETANIAKTISASMKTINNIIKIMDTIGLESLPIELQQVAQLRVKHPDYSIQQVADALEFPITKSGVNHRLRKINKIADDL.

A DNA-binding region (H-T-H motif) is located at residues 272–303 (SIQQVADALEFPITKSGVNHRLRKINKIADDL).

Belongs to the WhiA family.

Its function is as follows. Involved in cell division and chromosome segregation. The polypeptide is Probable cell division protein WhiA (Streptococcus pyogenes serotype M6 (strain ATCC BAA-946 / MGAS10394)).